A 217-amino-acid polypeptide reads, in one-letter code: Uridylate kinase (217 aa).

ATP is bound at residue 6–10 (KLSGR). Gly-38 provides a ligand contact to UMP. ATP contacts are provided by Gly-39 and Arg-43. Residues Asp-60 and 107–113 (FQPGQST) contribute to the UMP site. Positions 134, 139, and 142 each coordinate ATP.

This sequence belongs to the UMP kinase family. As to quaternary structure, homohexamer.

It is found in the cytoplasm. The enzyme catalyses UMP + ATP = UDP + ADP. The protein operates within pyrimidine metabolism; CTP biosynthesis via de novo pathway; UDP from UMP (UMPK route): step 1/1. With respect to regulation, inhibited by UTP. Catalyzes the reversible phosphorylation of UMP to UDP. This is Uridylate kinase from Pyrobaculum aerophilum (strain ATCC 51768 / DSM 7523 / JCM 9630 / CIP 104966 / NBRC 100827 / IM2).